A 378-amino-acid polypeptide reads, in one-letter code: Geraniol dehydrogenase (378 aa).

Positions 48, 75, 105, 108, 111, 119, and 179 each coordinate Zn(2+).

This sequence belongs to the zinc-containing alcohol dehydrogenase family. As to quaternary structure, monomer. Zn(2+) is required as a cofactor.

The enzyme catalyses (2E)-geraniol + NAD(+) = (2E)-geranial + NADH + H(+). It carries out the reaction (2E,6E)-farnesol + NAD(+) = (2E,6E)-farnesal + NADH + H(+). Its function is as follows. Catalyzes the NAD(+)-dependent oxidation of geraniol to geranial, playing an important role in the biosynthesis of neral, an alarm pheromone. Cannot use NADP(+). Also acts as a farnesol dehydrogenase by catalyzing the oxidation of (2E,6E)-farnesol to (2E,6E)-farnesal, with lower activity compared to geraniol dehydrogenase activity. In Carpoglyphus lactis (Dried fruit mite), this protein is Geraniol dehydrogenase.